The chain runs to 347 residues: N-acetyl-gamma-glutamyl-phosphate reductase (347 aa).

Residue cysteine 152 is part of the active site.

This sequence belongs to the NAGSA dehydrogenase family. Type 1 subfamily.

It is found in the cytoplasm. The enzyme catalyses N-acetyl-L-glutamate 5-semialdehyde + phosphate + NADP(+) = N-acetyl-L-glutamyl 5-phosphate + NADPH + H(+). It functions in the pathway amino-acid biosynthesis; L-arginine biosynthesis; N(2)-acetyl-L-ornithine from L-glutamate: step 3/4. Catalyzes the NADPH-dependent reduction of N-acetyl-5-glutamyl phosphate to yield N-acetyl-L-glutamate 5-semialdehyde. This is N-acetyl-gamma-glutamyl-phosphate reductase from Neisseria meningitidis serogroup C (strain 053442).